Reading from the N-terminus, the 78-residue chain is Major outer membrane lipoprotein Lpp (78 aa).

Positions M1–G20 are cleaved as a signal peptide. A lipid anchor (N-palmitoyl cysteine) is attached at C21. The S-diacylglycerol cysteine moiety is linked to residue C21. A coiled-coil region spans residues S22 to S75. Repeats lie at residues N24–V34 and N38–V48. The residue at position 78 (K78) is an N6-murein peptidoglycan lysine.

It belongs to the Lpp family. As to quaternary structure, homotrimer.

It is found in the cell outer membrane. The protein resides in the secreted. Its subcellular location is the cell wall. In terms of biological role, a highly abundant outer membrane lipoprotein that controls the distance between the inner and outer membranes. The only protein known to be covalently linked to the peptidoglycan network (PGN). Also non-covalently binds the PGN. The link between the cell outer membrane and PGN contributes to maintenance of the structural and functional integrity of the cell envelope, and maintains the correct distance between the PGN and the outer membrane. In Erwinia amylovora (Fire blight bacteria), this protein is Major outer membrane lipoprotein Lpp.